The sequence spans 302 residues: Ribosomal RNA small subunit methyltransferase H (302 aa).

Residues 34 to 36 (AGH), aspartate 53, phenylalanine 80, aspartate 101, and glutamine 108 each bind S-adenosyl-L-methionine. The disordered stretch occupies residues 283-302 (LEENPRSKSAKMRVLKKIER). Over residues 290–302 (KSAKMRVLKKIER) the composition is skewed to basic residues.

It belongs to the methyltransferase superfamily. RsmH family.

The protein resides in the cytoplasm. It catalyses the reaction cytidine(1402) in 16S rRNA + S-adenosyl-L-methionine = N(4)-methylcytidine(1402) in 16S rRNA + S-adenosyl-L-homocysteine + H(+). Specifically methylates the N4 position of cytidine in position 1402 (C1402) of 16S rRNA. This is Ribosomal RNA small subunit methyltransferase H from Mycoplasma mobile (strain ATCC 43663 / 163K / NCTC 11711) (Mesomycoplasma mobile).